The following is a 237-amino-acid chain: Type II secretion system protein J (237 aa).

The propeptide at Met-1–Gly-6 is leader sequence. Phe-7 is subject to N-methylphenylalanine. Residues Phe-7–Met-29 form a helical membrane-spanning segment. The tract at residues Pro-203–Glu-237 is disordered. The span at Gln-212–Gly-224 shows a compositional bias: gly residues. A compositionally biased stretch (pro residues) spans Pro-226 to Glu-237.

This sequence belongs to the GSP J family. In terms of assembly, type II secretion is composed of four main components: the outer membrane complex, the inner membrane complex, the cytoplasmic secretion ATPase and the periplasm-spanning pseudopilus. Forms the tip of the type II pseudopilus by interacting with XcpV, XcpU and XcpX. Interacts with core component XcpT. In terms of processing, cleaved by prepilin peptidase. Post-translationally, methylated by prepilin peptidase at the amino group of the N-terminal phenylalanine once the leader sequence is cleaved by prepilin peptidase.

The protein localises to the cell inner membrane. Its function is as follows. Component of the type II secretion system required for the energy-dependent secretion of extracellular factors such as proteases and toxins from the periplasm. Part of the pseudopilus tip complex that is critical for the recognition and binding of secretion substrates. Type II pseudopilus confers increased bacterial adhesive capabilities. This is Type II secretion system protein J (xcpW) from Pseudomonas aeruginosa (strain ATCC 15692 / DSM 22644 / CIP 104116 / JCM 14847 / LMG 12228 / 1C / PRS 101 / PAO1).